Here is a 186-residue protein sequence, read N- to C-terminus: Large ribosomal subunit protein uL5 (186 aa).

It belongs to the universal ribosomal protein uL5 family. In terms of assembly, part of the 50S ribosomal subunit; part of the 5S rRNA/L5/L18/L25 subcomplex. Contacts the 5S rRNA and the P site tRNA. Forms a bridge to the 30S subunit in the 70S ribosome.

This is one of the proteins that bind and probably mediate the attachment of the 5S RNA into the large ribosomal subunit, where it forms part of the central protuberance. In the 70S ribosome it contacts protein S13 of the 30S subunit (bridge B1b), connecting the 2 subunits; this bridge is implicated in subunit movement. Contacts the P site tRNA; the 5S rRNA and some of its associated proteins might help stabilize positioning of ribosome-bound tRNAs. The chain is Large ribosomal subunit protein uL5 from Ruegeria pomeroyi (strain ATCC 700808 / DSM 15171 / DSS-3) (Silicibacter pomeroyi).